A 141-amino-acid chain; its full sequence is Superoxide dismutase [Cu-Zn], chloroplastic (141 aa).

Cu cation-binding residues include His33, His35, and His50. The cysteines at positions 44 and 133 are disulfide-linked. Zn(2+)-binding residues include His50, His58, His67, and Asp70. His107 is a Cu cation binding site.

This sequence belongs to the Cu-Zn superoxide dismutase family. In terms of assembly, homotetramer. The cofactor is Cu cation. Zn(2+) is required as a cofactor.

The protein resides in the plastid. Its subcellular location is the chloroplast. It carries out the reaction 2 superoxide + 2 H(+) = H2O2 + O2. Functionally, destroys radicals which are normally produced within the cells and which are toxic to biological systems. This is Superoxide dismutase [Cu-Zn], chloroplastic (SODCP) from Pinus sylvestris (Scotch pine).